The primary structure comprises 95 residues: Small ribosomal subunit protein uS19 (95 aa).

Residues 73 to 95 (EFSPTRSYRGHGADKNAKGSKKK) form a disordered region.

Belongs to the universal ribosomal protein uS19 family.

Functionally, protein S19 forms a complex with S13 that binds strongly to the 16S ribosomal RNA. This chain is Small ribosomal subunit protein uS19, found in Deinococcus deserti (strain DSM 17065 / CIP 109153 / LMG 22923 / VCD115).